The following is a 1051-amino-acid chain: Putative helicase/primase complex protein (1051 aa).

The protein belongs to the asfivirus F1055L family.

Functionally, may be involved in DNA replication. This is Putative helicase/primase complex protein from Ornithodoros (relapsing fever ticks).